Consider the following 515-residue polypeptide: Ent-isokaurene C2/C3-hydroxylase (515 aa).

Residues 5–25 (LILDLCLSALFVVVLSKLVSS) form a helical membrane-spanning segment. Cys-452 is a heme binding site.

This sequence belongs to the cytochrome P450 family. It depends on heme as a cofactor.

It is found in the membrane. It carries out the reaction ent-isokaurene + 2 reduced [NADPH--hemoprotein reductase] + 2 O2 = ent-isokaurene-2beta,3beta-diol + 2 oxidized [NADPH--hemoprotein reductase] + 2 H2O + 2 H(+). In terms of biological role, enzyme of the diterpenoid metabolism involved in the biosynthesis of antibacterial oryzalides such as phytocassane. In Oryza sativa subsp. japonica (Rice), this protein is Ent-isokaurene C2/C3-hydroxylase (CYP71Z6).